We begin with the raw amino-acid sequence, 351 residues long: MKNKKLLVMAGGTGGHVFPAIAVAQTLQKQEWDICWLGTKDRMEAQLVPKYGIPIRFIQISGLRGKGIKALLNAPFAIFRAVLQAKKIIQEEKPDAVLGMGGYVSGPAGVAAKLCGVPIILHEQNAIAGLTNKLLGKIATCVLQAFPTAFPHAEVVGNPVREDLFEMPNPDIRFSDREEKLRVLVVGGSQGARVLNHTLPKVVAQLADKLEFRHQVGKGAVEEVSQLYGENLEQVKITEFIDNMAEAYAWADVVICRSGALTVCEIAAVGAAAIFVPFQHKDRQQYLNAKYLSDVGAAKIIEQADLTPEILVNYLKNLTRENLLQMALKAKTMSMPNAAQRVAEVIKQYSN.

UDP-N-acetyl-alpha-D-glucosamine-binding positions include 13–15 (TGG), Asn125, Arg161, Ser189, Ile241, 260–265 (ALTVCE), and Gln285.

Belongs to the glycosyltransferase 28 family. MurG subfamily.

It localises to the cell inner membrane. The catalysed reaction is di-trans,octa-cis-undecaprenyl diphospho-N-acetyl-alpha-D-muramoyl-L-alanyl-D-glutamyl-meso-2,6-diaminopimeloyl-D-alanyl-D-alanine + UDP-N-acetyl-alpha-D-glucosamine = di-trans,octa-cis-undecaprenyl diphospho-[N-acetyl-alpha-D-glucosaminyl-(1-&gt;4)]-N-acetyl-alpha-D-muramoyl-L-alanyl-D-glutamyl-meso-2,6-diaminopimeloyl-D-alanyl-D-alanine + UDP + H(+). It functions in the pathway cell wall biogenesis; peptidoglycan biosynthesis. In terms of biological role, cell wall formation. Catalyzes the transfer of a GlcNAc subunit on undecaprenyl-pyrophosphoryl-MurNAc-pentapeptide (lipid intermediate I) to form undecaprenyl-pyrophosphoryl-MurNAc-(pentapeptide)GlcNAc (lipid intermediate II). The chain is UDP-N-acetylglucosamine--N-acetylmuramyl-(pentapeptide) pyrophosphoryl-undecaprenol N-acetylglucosamine transferase from Haemophilus influenzae (strain ATCC 51907 / DSM 11121 / KW20 / Rd).